Here is a 315-residue protein sequence, read N- to C-terminus: MPYQYHIQSNDDLVTPYQEVRAGFVALALERNRKATPFVEQARALKIRVSQIERPQDLLQMRDIRPTLLAASGVSDKAAGHLQEQDKVDAIEGLIQNFLEPAGENFVEELVYRFLLTRGDTLGGSMRNVGGILAERKFARYIISALTLSNTSYKWLDKNSKTWLNQPDDDTDIELRLRGLSWNLEGRNRTFIYNVNVPIVRKNIDICLFDCRQNEIEKNIISNPNIYIALGELKGGIDPAGADEHWKTANSALARIRTAFDRHSLKPYTFFVGSAIEKSMAEEIWHQLNSGILTNAANLTQPDQVASLCAWFIQL.

It carries out the reaction Endonucleolytic cleavage of DNA to give specific double-stranded fragments with terminal 5'-phosphates.. Functionally, a P subtype restriction enzyme that recognizes the double-stranded sequence 5'-CYCGRG-3' and cleaves after C-1. This Anabaena variabilis protein is Type II restriction enzyme AvaI.